Consider the following 366-residue polypeptide: UDP-N-acetylglucosamine--N-acetylmuramyl-(pentapeptide) pyrophosphoryl-undecaprenol N-acetylglucosamine transferase (366 aa).

UDP-N-acetyl-alpha-D-glucosamine is bound by residues 14 to 16 (TGG), Asn125, Arg168, Ser196, and Gln297.

It belongs to the glycosyltransferase 28 family. MurG subfamily.

It is found in the cell inner membrane. The enzyme catalyses di-trans,octa-cis-undecaprenyl diphospho-N-acetyl-alpha-D-muramoyl-L-alanyl-D-glutamyl-meso-2,6-diaminopimeloyl-D-alanyl-D-alanine + UDP-N-acetyl-alpha-D-glucosamine = di-trans,octa-cis-undecaprenyl diphospho-[N-acetyl-alpha-D-glucosaminyl-(1-&gt;4)]-N-acetyl-alpha-D-muramoyl-L-alanyl-D-glutamyl-meso-2,6-diaminopimeloyl-D-alanyl-D-alanine + UDP + H(+). Its pathway is cell wall biogenesis; peptidoglycan biosynthesis. Its function is as follows. Cell wall formation. Catalyzes the transfer of a GlcNAc subunit on undecaprenyl-pyrophosphoryl-MurNAc-pentapeptide (lipid intermediate I) to form undecaprenyl-pyrophosphoryl-MurNAc-(pentapeptide)GlcNAc (lipid intermediate II). In Rhodopseudomonas palustris (strain ATCC BAA-98 / CGA009), this protein is UDP-N-acetylglucosamine--N-acetylmuramyl-(pentapeptide) pyrophosphoryl-undecaprenol N-acetylglucosamine transferase.